We begin with the raw amino-acid sequence, 179 residues long: MRFHHFWPPNDIYFGVGAAGIIEEVSLITNDRNYLFVNLNRYSLLNALNFFTRMSDINKIIVIISSSRLMPLARFWLTECKNVIAVFDAATSVQDIIRNVSQHQSGEKILTEQRDYRFRINRKDIVKMKYFLSESGMEELQDRFMNSSSTMYRWRKELAVKFGVREPRYLLLPDSVTLL.

The protein operates within glycan metabolism; Vi-antigen biosynthesis. Its pathway is capsule biogenesis; capsule polysaccharide biosynthesis. The protein is Vi polysaccharide biosynthesis protein TviA (tviA) of Salmonella typhi.